The chain runs to 190 residues: Peptidyl-prolyl cis-trans isomerase FKBP20-1 (190 aa).

An N-acetylglycine modification is found at Gly2. Residues 32–121 enclose the PPIase FKBP-type domain; the sequence is LPVVDVHYEG…IFEVELVACR (90 aa). Positions 149–163 are enriched in basic and acidic residues; that stretch reads AAAKEDDKKKREEAK. Residues 149–190 are disordered; sequence AAAKEDDKKKREEAKAAAAARIQAKLDAKKGPGKGKGKGKAK. Residues 179-190 show a composition bias toward basic residues; sequence GPGKGKGKGKAK.

This sequence belongs to the FKBP-type PPIase family.

The enzyme catalyses [protein]-peptidylproline (omega=180) = [protein]-peptidylproline (omega=0). Functionally, PPIases accelerate the folding of proteins. It catalyzes the cis-trans isomerization of proline imidic peptide bonds in oligopeptides. In Arabidopsis thaliana (Mouse-ear cress), this protein is Peptidyl-prolyl cis-trans isomerase FKBP20-1 (FKBP20-1).